Here is a 756-residue protein sequence, read N- to C-terminus: NADP-dependent malic enzyme (756 aa).

A malic enzyme region spans residues 1-428; it reads MTEQLRQAAL…KLTQFVYKTS (428 aa). The Proton donor role is filled by Y39. K94 acts as the Proton acceptor in catalysis. 3 residues coordinate a divalent metal cation: E136, D137, and D162. NADP(+) contacts are provided by residues 195 to 198, N288, and N320; that span reads AGAA. The phosphate acetyltransferase stretch occupies residues 429-756; sequence LFMRPIFSQA…AYAAVKAQQE (328 aa).

In the N-terminal section; belongs to the malic enzymes family. This sequence in the C-terminal section; belongs to the phosphate acetyltransferase and butyryltransferase family. It depends on Mg(2+) as a cofactor. Requires Mn(2+) as cofactor.

The enzyme catalyses (S)-malate + NADP(+) = pyruvate + CO2 + NADPH. It carries out the reaction oxaloacetate + H(+) = pyruvate + CO2. This Haemophilus influenzae (strain ATCC 51907 / DSM 11121 / KW20 / Rd) protein is NADP-dependent malic enzyme (maeB).